Reading from the N-terminus, the 579-residue chain is Zinc finger-containing ubiquitin peptidase 1 (579 aa).

The C2H2-type 1 zinc finger occupies 2 to 25 (LSCDICGETVSSEPDMKAHLLIVH). The segment at 30–53 (VICPFCKLSGVNYDEMCFHIETAH) adopts a C2H2-type 2; atypical zinc-finger fold. 2 C2H2-type zinc fingers span residues 155-178 (PECPFCGKIEDNSQDMETHVKTKH) and 194-216 (YDCPMCGLVCTNYHILQEHVDLH). Residues 227 to 249 (NRVQCSRDLELAQQLQQEEDRKR) are MIU. Residues 250-275 (RSEESRQEMEEFQKLQRQYGLDNSGG) are zUBD/ZHA. An N6-acetyllysine modification is found at K263. The active-site Nucleophile is the C361. The Proton acceptor role is filled by H492. D513 is a catalytic residue.

Belongs to the peptidase C78 family. ZUFSP subfamily. Interacts with RPA1 and RPA2.

It is found in the cytoplasm. The protein resides in the nucleus. It carries out the reaction Thiol-dependent hydrolysis of ester, thioester, amide, peptide and isopeptide bonds formed by the C-terminal Gly of ubiquitin (a 76-residue protein attached to proteins as an intracellular targeting signal).. In terms of biological role, deubiquitinase with endodeubiquitinase activity that specifically interacts with and cleaves 'Lys-63'-linked long polyubiquitin chains. Shows only weak activity against 'Lys-11' and 'Lys-48'-linked chains. Plays an important role in genome stability pathways, functioning to prevent spontaneous DNA damage and also promote cellular survival in response to exogenous DNA damage. Modulates the ubiquitination status of replication protein A (RPA) complex proteins in response to replication stress. This chain is Zinc finger-containing ubiquitin peptidase 1, found in Bos taurus (Bovine).